Here is a 176-residue protein sequence, read N- to C-terminus: Putative REP-associated tyrosine transposase (176 aa).

2 residues coordinate Mg(2+): H59 and H61. The active-site Nucleophile is the Y148.

Belongs to the transposase 17 family. RAYT subfamily. Homodimer. Mg(2+) serves as cofactor.

Its function is as follows. Transposase responsible for transposition an insertion sequence (IS) element. Transposition occurs in 2 main steps, excision from the donor DNA 'top strand' into a single strand circle and its subsequent reinsertion into the DNA target. This increases the copy number of the IS. In Haemophilus influenzae (strain ATCC 51907 / DSM 11121 / KW20 / Rd), this protein is Putative REP-associated tyrosine transposase.